The primary structure comprises 176 residues: ATP-dependent protease subunit HslV (176 aa).

Thr4 is a catalytic residue. Na(+)-binding residues include Ala159, Cys162, and Thr165.

It belongs to the peptidase T1B family. HslV subfamily. In terms of assembly, a double ring-shaped homohexamer of HslV is capped on each side by a ring-shaped HslU homohexamer. The assembly of the HslU/HslV complex is dependent on binding of ATP.

It localises to the cytoplasm. It carries out the reaction ATP-dependent cleavage of peptide bonds with broad specificity.. Allosterically activated by HslU binding. In terms of biological role, protease subunit of a proteasome-like degradation complex believed to be a general protein degrading machinery. The chain is ATP-dependent protease subunit HslV from Wolbachia sp. subsp. Brugia malayi (strain TRS).